The sequence spans 304 residues: Ribokinase (304 aa).

Substrate-binding positions include N12–D14, G41–N45, and E142. ATP-binding positions include N186 and T222 to G227. D248 and T250 together coordinate K(+). ATP-binding positions include G253 to D254 and N279. D254 serves as a coordination point for substrate. The active-site Proton acceptor is the D254. T285, K288, G290, and S294 together coordinate K(+).

The protein belongs to the carbohydrate kinase PfkB family. Ribokinase subfamily. In terms of assembly, homodimer. Requires Mg(2+) as cofactor.

The protein localises to the cytoplasm. It catalyses the reaction D-ribose + ATP = D-ribose 5-phosphate + ADP + H(+). It functions in the pathway carbohydrate metabolism; D-ribose degradation; D-ribose 5-phosphate from beta-D-ribopyranose: step 2/2. Its activity is regulated as follows. Activated by a monovalent cation that binds near, but not in, the active site. The most likely occupant of the site in vivo is potassium. Ion binding induces a conformational change that may alter substrate affinity. In terms of biological role, catalyzes the phosphorylation of ribose at O-5 in a reaction requiring ATP and magnesium. The resulting D-ribose-5-phosphate can then be used either for sythesis of nucleotides, histidine, and tryptophan, or as a component of the pentose phosphate pathway. This Staphylococcus aureus (strain COL) protein is Ribokinase.